Here is a 628-residue protein sequence, read N- to C-terminus: Set1/Ash2 histone methyltransferase complex subunit ASH2 (628 aa).

N-acetylmethionine is present on M1. Residues 1–18 (MAAAGAGPGQEAGAGPGP) are compositionally biased toward gly residues. The PHD-type; atypical zinc-finger motif lies at 1-66 (MAAAGAGPGQ…SGEAEGGEAN (66 aa)). Residues 1 to 107 (MAAAGAGPGQ…QAGSVDEENG (107 aa)) are disordered. Residues 36-65 (AAGAAAPPGEGISAAPTVEPSSGEAEGGEA) are compositionally biased toward low complexity. A DNA-binding region spans residues 67–177 (LVDVSGGLET…MCLSALANLT (111 aa)). At S101 the chain carries Phosphoserine. The C4-type zinc-finger motif lies at 117-150 (CGICTKWFTADTFGIDTSSCLPFMTNYSFHCNVC). A compositionally biased stretch (basic and acidic residues) spans 235-252 (LVKEHPDPGSKDPEEDYP). The interval 235–331 (LVKEHPDPGS…AQRLPPHGYP (97 aa)) is disordered. The span at 270-282 (NQKQSSAVSTSGN) shows a compositional bias: polar residues. Gly residues predominate over residues 283–295 (LNGGIAAGSSGKG). At R296 the chain carries Asymmetric dimethylarginine; by PRMT1 and PRMT5. S316 carries the post-translational modification Phosphoserine. An interaction with RBBP5 region spans residues 316–628 (SDPLFSAQRL…DGRRSPPWEP (313 aa)). In terms of domain architecture, B30.2/SPRY spans 360–583 (LDCWAGKPIP…VSINFGPCFK (224 aa)).

In terms of assembly, interacts with HCFC1. Core component of several methyltransferase-containing complexes including MLL1/MLL, MLL2/3 (also named ASCOM complex) and MLL4/WBP7. Each complex is at least composed of ASH2L, RBBP5, WDR5, DPY30, one or more specific histone methyltransferases (KMT2A/MLL1, KMT2D/MLL2, KMT2C/MLL3 and KMT2B/MLL4), and the facultative components PAGR1, BACC1, CHD8, E2F6, HCFC1, HCFC2, HSP70, INO80C, KDM6A, KANSL1, LAS1L, MAX, MCRS1, MEN1, MGA, KAT8/MOF, NCOA6, PAXIP1/PTIP, PELP1, PHF20, PRP31, RING2, RUVB1/TIP49A, RUVB2/TIP49B, SENP3, TAF1, TAF4, TAF6, TAF7, TAF9, TEX10 and alpha- and beta-tubulin. Component of the SET1 complex, at least composed of the catalytic subunit (SETD1A or SETD1B), WDR5, WDR82, RBBP5, ASH2L/ASH2, CXXC1/CFP1, HCFC1 and DPY30. Found in a complex with RBBP5, ASH2L, DPY30, KMT2A, KMT2D and WDR5. Component of a histone methylation complex composed of at least ZNF335, RBBP5, ASH2L and WDR5; the complex may have histone H3-specific methyltransferase activity, however does not have specificity for 'Lys-4' of histone H3. Within the complex, interacts with ZNF335. Interacts with RBBP5. Components of this complex may associate with components of a nuclear receptor-mediated transcription complex to form a complex at least composed of ZNF335, HCFC1, CCAR2, EMSY, MKI67, RBBP5, ASH2L and WDR5. Within this complex also interacts with CCAR2 and EMSY. Interacts with DPY30. Interacts with SETD1A and SETD1B. Post-translationally, both monomethylated and dimethylated on arginine residues in the C-terminus. Arg-296 is the major site. Methylation is not required for nuclear localization, nor for MLL complex integrity or maintenance of global histone H3K4me3 levels. Ubiquitously expressed. Predominantly expressed in adult heart and testis and fetal lung and liver, with barely detectable expression in adult lung, liver, kidney, prostate, and peripheral leukocytes.

The protein resides in the nucleus. In terms of biological role, transcriptional regulator. Component or associated component of some histone methyltransferase complexes which regulates transcription through recruitment of those complexes to gene promoters. Component of the Set1/Ash2 histone methyltransferase (HMT) complex, a complex that specifically methylates 'Lys-4' of histone H3, but not if the neighboring 'Lys-9' residue is already methylated. As part of the MLL1/MLL complex it is involved in methylation and dimethylation at 'Lys-4' of histone H3. May play a role in hematopoiesis. In association with RBBP5 and WDR5, stimulates the histone methyltransferase activities of KMT2A, KMT2B, KMT2C, KMT2D, SETD1A and SETD1B. This Homo sapiens (Human) protein is Set1/Ash2 histone methyltransferase complex subunit ASH2 (ASH2L).